The following is a 285-amino-acid chain: Sulfotransferase 2A1 (285 aa).

3'-phosphoadenylyl sulfate-binding residues include lysine 44, serine 45, glycine 46, threonine 47, asparagine 48, and tryptophan 49. Residue histidine 99 is the Proton acceptor of the active site. Arginine 121, serine 129, tyrosine 184, serine 218, methionine 223, arginine 247, lysine 248, and glycine 249 together coordinate 3'-phosphoadenylyl sulfate. At serine 251 the chain carries Phosphoserine.

The protein belongs to the sulfotransferase 1 family. In terms of assembly, homodimer. As to expression, predominanly expressed in liver. Detected also in adrenal gland and in jejunum.

It localises to the cytoplasm. The protein resides in the cytosol. It catalyses the reaction an alcohol + 3'-phosphoadenylyl sulfate = an alkyl sulfate + adenosine 3',5'-bisphosphate + H(+). The enzyme catalyses 3beta-hydroxyandrost-5-en-17-one + 3'-phosphoadenylyl sulfate = dehydroepiandrosterone 3-sulfate + adenosine 3',5'-bisphosphate + H(+). It carries out the reaction taurolithocholate + 3'-phosphoadenylyl sulfate = taurolithocholate 3-sulfate + adenosine 3',5'-bisphosphate + H(+). The catalysed reaction is lithocholate + 3'-phosphoadenylyl sulfate = lithocholate sulfate + adenosine 3',5'-bisphosphate + H(+). It catalyses the reaction (24S)-hydroxycholesterol + 3'-phosphoadenylyl sulfate = (24S)-hydroxycholesterol 24-sulfate + adenosine 3',5'-bisphosphate + H(+). The enzyme catalyses (24S)-hydroxycholesterol + 3'-phosphoadenylyl sulfate = (24S)-hydroxycholesterol 3-sulfate + adenosine 3',5'-bisphosphate + H(+). It carries out the reaction (24S)-hydroxycholesterol 24-sulfate + 3'-phosphoadenylyl sulfate = (24S)-hydroxycholesterol 3,24-disulfate + adenosine 3',5'-bisphosphate + H(+). The catalysed reaction is pregnenolone + 3'-phosphoadenylyl sulfate = pregnenolone sulfate + adenosine 3',5'-bisphosphate + H(+). It catalyses the reaction androsterone + 3'-phosphoadenylyl sulfate = androsterone 3alpha-sulfate + adenosine 3',5'-bisphosphate + H(+). Functionally, sulfotransferase that utilizes 3'-phospho-5'-adenylyl sulfate (PAPS) as sulfonate donor to catalyze the sulfonation of steroids and bile acids in the liver and adrenal glands. Mediates the sulfation of a wide range of steroids and sterols, including pregnenolone, androsterone, DHEA, bile acids, cholesterol and as well many xenobiotics that contain alcohol and phenol functional groups. Sulfonation increases the water solubility of most compounds, and therefore their renal excretion, but it can also result in bioactivation to form active metabolites. Plays an important role in maintening steroid and lipid homeostasis. Plays a key role in bile acid metabolism. In addition, catalyzes the metabolic activation of potent carcinogenic polycyclic arylmethanols. The protein is Sulfotransferase 2A1 (SULT2A1) of Macaca fascicularis (Crab-eating macaque).